Here is a 190-residue protein sequence, read N- to C-terminus: Biphenyl-2,3-diol 1,2-dioxygenase 2 (190 aa).

In terms of domain architecture, VOC spans 6–124 (KFAHVVLQTS…DGNFVELQID (119 aa)). Fe cation is bound by residues His9, His72, and Glu120.

This sequence belongs to the extradiol ring-cleavage dioxygenase family. Homohexamer. Fe(2+) is required as a cofactor.

It catalyses the reaction biphenyl-2,3-diol + O2 = 2-hydroxy-6-oxo-6-phenylhexa-2,4-dienoate + H(+). Its pathway is xenobiotic degradation; biphenyl degradation; 2-hydroxy-2,4-pentadienoate and benzoate from biphenyl: step 3/4. This Rhodococcus globerulus protein is Biphenyl-2,3-diol 1,2-dioxygenase 2 (bphC2).